The sequence spans 410 residues: Ribonucleoside-diphosphate reductase small chain (410 aa).

Positions 1–20 are enriched in polar residues; the sequence is MSVQTSPSKQVTSGIQNLNM. Disordered stretches follow at residues 1 to 43 and 55 to 78; these read MSVQ…DEDL and NANKKAAEAKKMAPTLKPEEANEP. Basic and acidic residues-rich tracts occupy residues 23 to 43 and 55 to 65; these read PAKKLDFGATDKENKPFDEDL and NANKKAAEAKK. 3 residues coordinate Fe cation: aspartate 146, glutamate 177, and histidine 180. Tyrosine 184 is an active-site residue. Fe cation contacts are provided by glutamate 240, glutamate 274, and histidine 277.

This sequence belongs to the ribonucleoside diphosphate reductase small chain family. As to quaternary structure, heterodimer of a large and a small subunit. The cofactor is Fe cation.

The enzyme catalyses a 2'-deoxyribonucleoside 5'-diphosphate + [thioredoxin]-disulfide + H2O = a ribonucleoside 5'-diphosphate + [thioredoxin]-dithiol. Functionally, provides the precursors necessary for DNA synthesis. Catalyzes the biosynthesis of deoxyribonucleotides from the corresponding ribonucleotides. The sequence is that of Ribonucleoside-diphosphate reductase small chain (rnr-2) from Neurospora crassa (strain ATCC 24698 / 74-OR23-1A / CBS 708.71 / DSM 1257 / FGSC 987).